Consider the following 308-residue polypeptide: Glutaminase (308 aa).

The substrate site is built by Ser66, Asn117, Glu161, Asn168, Tyr192, Tyr244, and Val262.

Belongs to the glutaminase family. As to quaternary structure, homotetramer.

The catalysed reaction is L-glutamine + H2O = L-glutamate + NH4(+). The polypeptide is Glutaminase (Salmonella agona (strain SL483)).